Reading from the N-terminus, the 326-residue chain is Endochitinase (326 aa).

The signal sequence occupies residues 1 to 25; the sequence is MVYCTASLPLLLLLLVGLLAGEAFA. In terms of domain architecture, Chitin-binding type-1 spans 26–66; it reads EQCGRQAGGALCPGGLCCSQFGWCGSTSDYCGPTCQSQCGG. 7 disulfides stabilise this stretch: cysteine 28/cysteine 43, cysteine 37/cysteine 49, cysteine 42/cysteine 56, cysteine 60/cysteine 64, cysteine 96/cysteine 158, cysteine 170/cysteine 178, and cysteine 277/cysteine 309. The Proton donor role is filled by glutamate 140.

This sequence belongs to the glycosyl hydrolase 19 family. Chitinase class I subfamily. As to expression, expressed in the pulp of the fruit (at protein level). Expressed in mesocarp (at protein level).

It catalyses the reaction Random endo-hydrolysis of N-acetyl-beta-D-glucosaminide (1-&gt;4)-beta-linkages in chitin and chitodextrins.. Its function is as follows. Defense against chitin-containing fungal pathogens. Has in vitro antifungal activity against F.oxysporum inhibiting its growth and the branching of its hyphae. Has endochitinase activity, but no exochitinase or lysozyme activities. This chain is Endochitinase, found in Persea americana (Avocado).